A 303-amino-acid chain; its full sequence is Sushi domain-containing protein 6 (303 aa).

An N-terminal signal peptide occupies residues 1–39 (MCHGRIAPKSTSVFAVASVGHGVFLPLVILCTLLGDGLA). A Sushi domain is found at 40–104 (SVCPLPPEPE…KPAMEISCRL (65 aa)). The Extracellular segment spans residues 40–120 (SVCPLPPEPE…HTSLGVPTLS (81 aa)). 2 disulfides stabilise this stretch: Cys-42-Cys-89 and Cys-74-Cys-102. Residues 121-141 (IVASTASSVALILLLVVLFVL) traverse the membrane as a helical segment. The Cytoplasmic portion of the chain corresponds to 142–303 (LQPKLKSFHH…TDDIPLLKEA (162 aa)). Disordered stretches follow at residues 199–237 (VLSE…GQSG) and 263–282 (GSGN…NSDI).

The protein localises to the membrane. May play a role in growth-suppressive activity and cell death. May be involved in the production of chemokine molecules in umbilical vein endothelial cells (HUVECs) cultured in THP1 monocyte LPS-induced medium. Plays a role in preventing tumor onset. The protein is Sushi domain-containing protein 6 of Homo sapiens (Human).